Here is a 348-residue protein sequence, read N- to C-terminus: D-erythrose-4-phosphate dehydrogenase (348 aa).

12–13 serves as a coordination point for NAD(+); it reads RI. Substrate is bound by residues 154–156, arginine 200, 213–214, and arginine 236; these read SCT and TR. Cysteine 155 functions as the Nucleophile in the catalytic mechanism. NAD(+) is bound at residue asparagine 318.

This sequence belongs to the glyceraldehyde-3-phosphate dehydrogenase family. Epd subfamily. In terms of assembly, homotetramer.

It localises to the cytoplasm. It catalyses the reaction D-erythrose 4-phosphate + NAD(+) + H2O = 4-phospho-D-erythronate + NADH + 2 H(+). It participates in cofactor biosynthesis; pyridoxine 5'-phosphate biosynthesis; pyridoxine 5'-phosphate from D-erythrose 4-phosphate: step 1/5. In terms of biological role, catalyzes the NAD-dependent conversion of D-erythrose 4-phosphate to 4-phosphoerythronate. The protein is D-erythrose-4-phosphate dehydrogenase of Erwinia tasmaniensis (strain DSM 17950 / CFBP 7177 / CIP 109463 / NCPPB 4357 / Et1/99).